Consider the following 573-residue polypeptide: Septation ring formation regulator EzrA (573 aa).

At 1 to 2 the chain is on the extracellular side; the sequence is MQ. Residues 3 to 21 traverse the membrane as a helical segment; it reads VAIGIVVVAIVIYAAVKGF. The Cytoplasmic segment spans residues 22–573; sequence QFYIDKQVRQ…KQADKMNDEA (552 aa). Coiled-coil stretches lie at residues 100 to 188, 317 to 364, and 416 to 488; these read DAQQ…LAKA, LTHA…VYQA, and ETLQ…TLKE.

The protein belongs to the EzrA family.

It is found in the cell membrane. Negative regulator of FtsZ ring formation; modulates the frequency and position of FtsZ ring formation. Inhibits FtsZ ring formation at polar sites. Interacts either with FtsZ or with one of its binding partners to promote depolymerization. In Lactiplantibacillus plantarum (strain ATCC BAA-793 / NCIMB 8826 / WCFS1) (Lactobacillus plantarum), this protein is Septation ring formation regulator EzrA.